Reading from the N-terminus, the 246-residue chain is Probable phosphatase ASA_1316 (246 aa).

The Zn(2+) site is built by H8, H10, H16, H41, E74, H102, H132, D193, and H195.

It belongs to the PHP family. It depends on Zn(2+) as a cofactor.

This chain is Probable phosphatase ASA_1316, found in Aeromonas salmonicida (strain A449).